The sequence spans 847 residues: Zinc transporter ZIP10 (847 aa).

The first 26 residues, 1–26 (MMRVHTHTRLCFLCVLTLLYHQCSHC), serve as a signal peptide directing secretion. Residues 136–374 (GRHSHSAGHP…RREVPGSPAH (239 aa)) are disordered. Residues 162–171 (HHENEEHTLA) are compositionally biased toward basic and acidic residues. A compositionally biased stretch (polar residues) spans 179 to 188 (TLGTGATPPS). Over residues 190–269 (SEEHDHDHEH…QEHNDLSDQN (80 aa)) the composition is skewed to basic and acidic residues. Basic residues-rich tracts occupy residues 270–285 (HHHHDHHHHKHPHPHL) and 314–330 (TRRHRRPSKVKAHRGRN). N-linked (GlcNAc...) asparagine glycosylation is present at Asn385. 3 helical membrane passes run 447–467 (FVSITIISLLSLLGVVLVPIL), 474–494 (FLLTFLVALAVGTLSGDALLH), and 529–549 (GLTALAGIYLLFIIEHCIGMF). The segment at 613-676 (ELQPLDSPSK…HSHHGHCHSD (64 aa)) is disordered. A compositionally biased stretch (basic and acidic residues) spans 629–646 (DSDHPYEAPVKTEEDNVP). Residues 648–672 (AKSKKHGHGHGHGHGHGHGHSHHGH) are compositionally biased toward basic residues. A run of 4 helical transmembrane segments spans residues 705–725 (AIGAAFSANITGGISTSVAVF), 750–770 (IVYNLLSALMAYAGMVIGTAV), 779–799 (SWIFAVTAGMFLYVALVDMLP), and 817–837 (FVLQNFGMLTGFGIMLLIAIF).

The protein belongs to the ZIP transporter (TC 2.A.5) family. In terms of processing, undergoes N-terminal ectodomain shedding.

Its subcellular location is the cell membrane. It localises to the apical cell membrane. It carries out the reaction Zn(2+)(in) = Zn(2+)(out). Zinc-influx transporter. When associated with slc39a6, the heterodimer slc39a10/slc39a6 has a functional role in epithelial-mesenchymal transition (EMT) during embryonic development. Slc39a10/slc39a6 heterodimers play also an essentiel role in initiating mitosis by importing zinc into cells to initiate a pathway resulting in the onset of mitosis. When associated with slc39a6, the heterodimer controls Ncam1 phosphorylation and integration into focal adhesion complexes during EMT. The polypeptide is Zinc transporter ZIP10 (Danio rerio (Zebrafish)).